The sequence spans 219 residues: Thiamine-phosphate synthase (219 aa).

4-amino-2-methyl-5-(diphosphooxymethyl)pyrimidine contacts are provided by residues 44 to 48 (QFREK) and N79. 2 residues coordinate Mg(2+): D80 and D99. A 4-amino-2-methyl-5-(diphosphooxymethyl)pyrimidine-binding site is contributed by S117. Residue 143–145 (TST) coordinates 2-[(2R,5Z)-2-carboxy-4-methylthiazol-5(2H)-ylidene]ethyl phosphate. K146 contacts 4-amino-2-methyl-5-(diphosphooxymethyl)pyrimidine. Residues G175 and 195–196 (IS) contribute to the 2-[(2R,5Z)-2-carboxy-4-methylthiazol-5(2H)-ylidene]ethyl phosphate site.

This sequence belongs to the thiamine-phosphate synthase family. Mg(2+) is required as a cofactor.

It catalyses the reaction 2-[(2R,5Z)-2-carboxy-4-methylthiazol-5(2H)-ylidene]ethyl phosphate + 4-amino-2-methyl-5-(diphosphooxymethyl)pyrimidine + 2 H(+) = thiamine phosphate + CO2 + diphosphate. It carries out the reaction 2-(2-carboxy-4-methylthiazol-5-yl)ethyl phosphate + 4-amino-2-methyl-5-(diphosphooxymethyl)pyrimidine + 2 H(+) = thiamine phosphate + CO2 + diphosphate. The catalysed reaction is 4-methyl-5-(2-phosphooxyethyl)-thiazole + 4-amino-2-methyl-5-(diphosphooxymethyl)pyrimidine + H(+) = thiamine phosphate + diphosphate. Its pathway is cofactor biosynthesis; thiamine diphosphate biosynthesis; thiamine phosphate from 4-amino-2-methyl-5-diphosphomethylpyrimidine and 4-methyl-5-(2-phosphoethyl)-thiazole: step 1/1. In terms of biological role, condenses 4-methyl-5-(beta-hydroxyethyl)thiazole monophosphate (THZ-P) and 2-methyl-4-amino-5-hydroxymethyl pyrimidine pyrophosphate (HMP-PP) to form thiamine monophosphate (TMP). This chain is Thiamine-phosphate synthase, found in Bacillus cereus (strain 03BB102).